The sequence spans 210 residues: High frequency lysogenization protein HflD homolog (210 aa).

Positions 103-130 (EAKAKLAERLQQIERQLPLYENDIMADQ) form a coiled coil.

This sequence belongs to the HflD family.

It localises to the cytoplasm. Its subcellular location is the cell inner membrane. The chain is High frequency lysogenization protein HflD homolog from Actinobacillus pleuropneumoniae serotype 3 (strain JL03).